The following is a 368-amino-acid chain: ATP-dependent (S)-NAD(P)H-hydrate dehydratase (368 aa).

In terms of domain architecture, YjeF C-terminal spans 13–357 (LFKKVRKIVP…DEVHESFLEL (345 aa)). Residues Gly-125 and 178–184 (NVNEFSR) each bind (6S)-NADPHX. Residues 231–235 (KGPHD) and 250–259 (GGLKRSGGQG) contribute to the ATP site. Residue Asp-260 coordinates (6S)-NADPHX.

Belongs to the NnrD/CARKD family. Mg(2+) serves as cofactor.

The protein resides in the cytoplasm. It catalyses the reaction (6S)-NADHX + ATP = ADP + phosphate + NADH + H(+). It carries out the reaction (6S)-NADPHX + ATP = ADP + phosphate + NADPH + H(+). Its function is as follows. Catalyzes the dehydration of the S-form of NAD(P)HX at the expense of ATP, which is converted to ADP. Together with NAD(P)HX epimerase, which catalyzes the epimerization of the S- and R-forms, the enzyme allows the repair of both epimers of NAD(P)HX, a damaged form of NAD(P)H that is a result of enzymatic or heat-dependent hydration. The polypeptide is ATP-dependent (S)-NAD(P)H-hydrate dehydratase (Aspergillus fumigatus (strain ATCC MYA-4609 / CBS 101355 / FGSC A1100 / Af293) (Neosartorya fumigata)).